The chain runs to 112 residues: Putative pterin-4-alpha-carbinolamine dehydratase (112 aa).

The protein belongs to the pterin-4-alpha-carbinolamine dehydratase family.

It catalyses the reaction (4aS,6R)-4a-hydroxy-L-erythro-5,6,7,8-tetrahydrobiopterin = (6R)-L-erythro-6,7-dihydrobiopterin + H2O. The polypeptide is Putative pterin-4-alpha-carbinolamine dehydratase (Shewanella loihica (strain ATCC BAA-1088 / PV-4)).